Consider the following 295-residue polypeptide: Methionine aminopeptidase (295 aa).

His62 provides a ligand contact to substrate. Residues Asp82, Asp93, and His153 each contribute to the a divalent metal cation site. His161 lines the substrate pocket. A divalent metal cation contacts are provided by Glu187 and Glu280.

Belongs to the peptidase M24A family. Methionine aminopeptidase archaeal type 2 subfamily. As to quaternary structure, monomer. Co(2+) is required as a cofactor. The cofactor is Zn(2+). Requires Mn(2+) as cofactor. Fe(2+) serves as cofactor.

The enzyme catalyses Release of N-terminal amino acids, preferentially methionine, from peptides and arylamides.. In terms of biological role, removes the N-terminal methionine from nascent proteins. The N-terminal methionine is often cleaved when the second residue in the primary sequence is small and uncharged (Met-Ala-, Cys, Gly, Pro, Ser, Thr, or Val). This chain is Methionine aminopeptidase, found in Pyrococcus horikoshii (strain ATCC 700860 / DSM 12428 / JCM 9974 / NBRC 100139 / OT-3).